The chain runs to 395 residues: MAKEKFDRSKSHVNIGTIGHVDHGKTTLTAAIATVLSKHGGGEAQSYDSIDNAPEEKERGITINTSHIEYETETRHYAHVDCPGHADYVKNMITGAAQMDGAILVVSAADGPMPQTREHILLSRNVGVPYIVVFLNKMDMVDDEELLELVEMEVRDLLSEYDFPGDDVPVIAGSALKALEGDESYEEKILELMAAVDEYIPTPERDTDKPFMMPVEDVFSITGRGTVATGRVERGEVRVGDEVEIVGIKDETSKTTVTGVEMFRKLLDYAEAGDNIGALLRGVAREDIERGQVLAKPATITPHTKFKAEVYVLSKEEGGRHTPFFTNYRPQFYFRTTDVTGVVELPEGTEMVMPGDNVAMDVELIHPIAIEDGTRFSIREGGRTVGSGVVTEIVK.

The tr-type G domain maps to 10–204 (KSHVNIGTIG…AVDEYIPTPE (195 aa)). The G1 stretch occupies residues 19–26 (GHVDHGKT). Residue 19 to 26 (GHVDHGKT) participates in GTP binding. Mg(2+) is bound at residue T26. The G2 stretch occupies residues 60–64 (GITIN). Positions 81–84 (DCPG) are G3. GTP contacts are provided by residues 81–85 (DCPGH) and 136–139 (NKMD). A G4 region spans residues 136–139 (NKMD). The interval 174–176 (SAL) is G5.

Belongs to the TRAFAC class translation factor GTPase superfamily. Classic translation factor GTPase family. EF-Tu/EF-1A subfamily. Monomer.

Its subcellular location is the cytoplasm. The catalysed reaction is GTP + H2O = GDP + phosphate + H(+). GTP hydrolase that promotes the GTP-dependent binding of aminoacyl-tRNA to the A-site of ribosomes during protein biosynthesis. In Enterococcus faecalis (strain ATCC 700802 / V583), this protein is Elongation factor Tu.